The primary structure comprises 674 residues: Protein tesmin/TSO1-like CXC 2 (674 aa).

Composition is skewed to polar residues over residues Met1–Ser16 and Thr76–Glu89. Disordered regions lie at residues Met1–Phe20 and Lys69–Ile113. Basic and acidic residues predominate over residues Ser95–Lys109. Positions Ser373 to Gly498 constitute a CRC domain. Disordered stretches follow at residues Ser504–Asn529 and Ile623–Gly655. A compositionally biased stretch (acidic residues) spans Met507 to Glu516.

Belongs to the lin-54 family. As to expression, ubiquitous but expressed mostly in all the aerial organs with highest expression in flowers.

The protein resides in the nucleus. In terms of biological role, plays a role in development of both male and female reproductive tissues. This chain is Protein tesmin/TSO1-like CXC 2 (TCX2), found in Arabidopsis thaliana (Mouse-ear cress).